Reading from the N-terminus, the 506-residue chain is Sugar transport protein 5 (506 aa).

Residues 1-19 are Cytoplasmic-facing; the sequence is MAGGGLALDVSSAGNIDAK. The next 12 helical transmembrane spans lie at 20–40, 81–101, 117–137, 141–161, 168–188, 201–221, 287–307, 325–345, 352–372, 390–410, 430–450, and 456–476; these read ITAA…IFGY, LLTA…LVAS, GFTF…AMLI, ILLG…LSEV, GAFN…ANLI, ISLG…LFIS, LVVA…VNAF, IATF…TMVI, FLFI…AVLL, VTVV…WGPL, LSVA…LATL, and GAFL…IMFL. The Cytoplasmic segment spans residues 477 to 506; it reads PETKGIPVDSMYQVWEKHWYWQRFTKPTST.

The protein belongs to the major facilitator superfamily. Sugar transporter (TC 2.A.1.1) family.

It is found in the membrane. Its function is as follows. Mediates an active uptake of hexoses, probably by sugar/hydrogen symport. This chain is Sugar transport protein 5 (STP5), found in Arabidopsis thaliana (Mouse-ear cress).